Consider the following 554-residue polypeptide: Asparagine--tRNA ligase, cytoplasmic (554 aa).

Belongs to the class-II aminoacyl-tRNA synthetase family.

The protein localises to the cytoplasm. It is found in the cytosol. It carries out the reaction tRNA(Asn) + L-asparagine + ATP = L-asparaginyl-tRNA(Asn) + AMP + diphosphate + H(+). Its function is as follows. Catalyzes the attachment of asparagine to tRNA(Asn) in a two-step reaction: asparagine is first activated by ATP to form Asn-AMP and then transferred to the acceptor end of tRNA(Asn). The chain is Asparagine--tRNA ligase, cytoplasmic from Saccharomyces cerevisiae (strain ATCC 204508 / S288c) (Baker's yeast).